Consider the following 1178-residue polypeptide: F-box/WD repeat-containing protein A-like protein (1178 aa).

An START domain is found at 1–208; sequence MQYVNGMDIV…TLPNLIKYIK (208 aa). Disordered regions lie at residues 223-296, 569-594, and 618-649; these read KTPD…NLNE, SLII…DNGI, and SSSS…STFS. 2 stretches are compositionally biased toward low complexity: residues 229–293 and 571–580; these read NPNL…SNEN and IINSPPNSNN. The region spanning 717-763 is the F-box domain; sequence CSLFDLLPYEMIQYIFTLMDATHLIRMSRTCKYFNRICLDDNIWRDL. The disordered stretch occupies residues 804 to 841; sequence KKSNNSSPLSASSSSSSPSPPLLPPPPPPIPQLPDMLL. The span at 809–820 shows a compositional bias: low complexity; sequence SSPLSASSSSSS. The span at 821–835 shows a compositional bias: pro residues; that stretch reads PSPPLLPPPPPPIPQ. 7 WD repeats span residues 886-923, 925-979, 981-1017, 1020-1059, 1062-1100, 1104-1141, and 1146-1178; these read GHKG…CEST, RCGA…IEKE, RFLY…ELQM, IENT…TELV, GHKG…SAIH, SHSS…EPNL, and NNLS…FNSK.

Functionally, substrate recognition component of a SCF (SKP1-CUL1-F-box protein) E3 ubiquitin-protein ligase complex which mediates the ubiquitination and subsequent proteasomal degradation of target proteins. This is F-box/WD repeat-containing protein A-like protein from Dictyostelium discoideum (Social amoeba).